The following is a 410-amino-acid chain: Cysteine desulfurase IscS (410 aa).

Residues 80-81 (AT), N160, Q188, and 208-210 (SGH) contribute to the pyridoxal 5'-phosphate site. K211 bears the N6-(pyridoxal phosphate)lysine mark. T248 provides a ligand contact to pyridoxal 5'-phosphate. C334 serves as the catalytic Cysteine persulfide intermediate. Position 334 (C334) interacts with [2Fe-2S] cluster.

The protein belongs to the class-V pyridoxal-phosphate-dependent aminotransferase family. NifS/IscS subfamily. In terms of assembly, homodimer. Forms a heterotetramer with IscU, interacts with other sulfur acceptors. It depends on pyridoxal 5'-phosphate as a cofactor.

Its subcellular location is the cytoplasm. The catalysed reaction is (sulfur carrier)-H + L-cysteine = (sulfur carrier)-SH + L-alanine. It functions in the pathway cofactor biosynthesis; iron-sulfur cluster biosynthesis. In terms of biological role, master enzyme that delivers sulfur to a number of partners involved in Fe-S cluster assembly, tRNA modification or cofactor biosynthesis. Catalyzes the removal of elemental sulfur atoms from cysteine to produce alanine. Functions as a sulfur delivery protein for Fe-S cluster synthesis onto IscU, an Fe-S scaffold assembly protein, as well as other S acceptor proteins. The polypeptide is Cysteine desulfurase IscS (Rickettsia conorii (strain ATCC VR-613 / Malish 7)).